A 267-amino-acid polypeptide reads, in one-letter code: RWD domain-containing protein 3 (267 aa).

The 108-residue stretch at 7-114 (QELSALAAIF…LWIQQNLRLV (108 aa)) folds into the RWD domain. Interaction with UBE2I/UBC9 regions lie at residues 13–15 (AAI) and 100–102 (VHE).

As to quaternary structure, interacts with UBE2I/UBC9, NFKBIA, HIF1A and NCOA2.

Its subcellular location is the nucleus. The protein resides in the cytoplasm. Functionally, enhancer of SUMO conjugation. Via its interaction with UBE2I/UBC9, increases SUMO conjugation to proteins by promoting the binding of E1 and E2 enzymes, thioester linkage between SUMO and UBE2I/UBC9 and transfer of SUMO to specific target proteins which include HIF1A, PIAS, NFKBIA, NR3C1 and TOP1. Positively regulates the NF-kappa-B signaling pathway by enhancing the sumoylation of NF-kappa-B inhibitor alpha (NFKBIA), promoting its stabilization which consequently leads to an increased inhibition of NF-kappa-B transcriptional activity. Negatively regulates the hypoxia-inducible factor-1 alpha (HIF1A) signaling pathway by increasing the sumoylation of HIF1A, promoting its stabilization, transcriptional activity and the expression of its target gene VEGFA during hypoxia. Has no effect on ubiquitination. The chain is RWD domain-containing protein 3 (Rwdd3) from Mus musculus (Mouse).